Reading from the N-terminus, the 338-residue chain is UDP-3-O-acylglucosamine N-acyltransferase (338 aa).

The active-site Proton acceptor is His239.

The protein belongs to the transferase hexapeptide repeat family. LpxD subfamily. Homotrimer.

It carries out the reaction a UDP-3-O-[(3R)-3-hydroxyacyl]-alpha-D-glucosamine + a (3R)-hydroxyacyl-[ACP] = a UDP-2-N,3-O-bis[(3R)-3-hydroxyacyl]-alpha-D-glucosamine + holo-[ACP] + H(+). It participates in bacterial outer membrane biogenesis; LPS lipid A biosynthesis. Catalyzes the N-acylation of UDP-3-O-acylglucosamine using 3-hydroxyacyl-ACP as the acyl donor. Is involved in the biosynthesis of lipid A, a phosphorylated glycolipid that anchors the lipopolysaccharide to the outer membrane of the cell. This is UDP-3-O-acylglucosamine N-acyltransferase from Xylella fastidiosa (strain 9a5c).